A 285-amino-acid chain; its full sequence is Nucleotide-binding protein GSU1884 (285 aa).

Residue 8–15 (GLSGSGKS) participates in ATP binding. 59 to 62 (DIRG) contributes to the GTP binding site.

It belongs to the RapZ-like family.

Displays ATPase and GTPase activities. This is Nucleotide-binding protein GSU1884 from Geobacter sulfurreducens (strain ATCC 51573 / DSM 12127 / PCA).